We begin with the raw amino-acid sequence, 120 residues long: SPbeta prophage-derived uncharacterized protein YosG (120 aa).

The protein is SPbeta prophage-derived uncharacterized protein YosG (yosG) of Bacillus subtilis (strain 168).